A 405-amino-acid chain; its full sequence is 8-amino-7-oxononanoate synthase 1 (405 aa).

Arg29 contributes to the substrate binding site. 116–117 is a pyridoxal 5'-phosphate binding site; that stretch reads GY. Residue His141 coordinates substrate. Positions 187, 215, and 247 each coordinate pyridoxal 5'-phosphate. Lys250 carries the post-translational modification N6-(pyridoxal phosphate)lysine. Thr368 lines the substrate pocket.

It belongs to the class-II pyridoxal-phosphate-dependent aminotransferase family. BioF subfamily. Homodimer. Pyridoxal 5'-phosphate is required as a cofactor.

It carries out the reaction 6-carboxyhexanoyl-[ACP] + L-alanine + H(+) = (8S)-8-amino-7-oxononanoate + holo-[ACP] + CO2. It functions in the pathway cofactor biosynthesis; biotin biosynthesis. Its function is as follows. Catalyzes the decarboxylative condensation of pimeloyl-[acyl-carrier protein] and L-alanine to produce 8-amino-7-oxononanoate (AON), [acyl-carrier protein], and carbon dioxide. This Polaromonas sp. (strain JS666 / ATCC BAA-500) protein is 8-amino-7-oxononanoate synthase 1.